The sequence spans 477 residues: Aspartyl/glutamyl-tRNA(Asn/Gln) amidotransferase subunit B (477 aa).

This sequence belongs to the GatB/GatE family. GatB subfamily. As to quaternary structure, heterotrimer of A, B and C subunits.

The enzyme catalyses L-glutamyl-tRNA(Gln) + L-glutamine + ATP + H2O = L-glutaminyl-tRNA(Gln) + L-glutamate + ADP + phosphate + H(+). It catalyses the reaction L-aspartyl-tRNA(Asn) + L-glutamine + ATP + H2O = L-asparaginyl-tRNA(Asn) + L-glutamate + ADP + phosphate + 2 H(+). Functionally, allows the formation of correctly charged Asn-tRNA(Asn) or Gln-tRNA(Gln) through the transamidation of misacylated Asp-tRNA(Asn) or Glu-tRNA(Gln) in organisms which lack either or both of asparaginyl-tRNA or glutaminyl-tRNA synthetases. The reaction takes place in the presence of glutamine and ATP through an activated phospho-Asp-tRNA(Asn) or phospho-Glu-tRNA(Gln). This Coxiella burnetii (strain RSA 493 / Nine Mile phase I) protein is Aspartyl/glutamyl-tRNA(Asn/Gln) amidotransferase subunit B.